The sequence spans 139 residues: uncharacterized protein (139 aa).

Residues 1 to 26 form a disordered region; sequence MQLVREKRGAHQHVPRKTTEPQKVRG. The span at 17-26 shows a compositional bias: basic and acidic residues; sequence KTTEPQKVRG.

This is an uncharacterized protein from Ictalurid herpesvirus 1 (strain Auburn) (IcHV-1).